Consider the following 171-residue polypeptide: Deoxyuridine 5'-triphosphate nucleotidohydrolase (171 aa).

Mg(2+) is bound at residue glutamate 143.

Belongs to the dUTPase family. In terms of assembly, homotrimer. It depends on Mg(2+) as a cofactor.

The catalysed reaction is dUTP + H2O = dUMP + diphosphate + H(+). The protein operates within pyrimidine metabolism; dUMP biosynthesis; dUMP from dCTP (dUTP route): step 2/2. This enzyme is involved in nucleotide metabolism: it produces dUMP, the immediate precursor of thymidine nucleotides and it decreases the intracellular concentration of dUTP, preventing uracil incorporation into DNA. In Oryza sativa subsp. japonica (Rice), this protein is Deoxyuridine 5'-triphosphate nucleotidohydrolase (DUT).